Reading from the N-terminus, the 362-residue chain is UDP-N-acetylglucosamine--N-acetylmuramyl-(pentapeptide) pyrophosphoryl-undecaprenol N-acetylglucosamine transferase (362 aa).

UDP-N-acetyl-alpha-D-glucosamine contacts are provided by residues 14 to 16, Arg-170, Ser-199, and Gln-289; that span reads TGG.

The protein belongs to the glycosyltransferase 28 family. MurG subfamily.

Its subcellular location is the cell inner membrane. It catalyses the reaction di-trans,octa-cis-undecaprenyl diphospho-N-acetyl-alpha-D-muramoyl-L-alanyl-D-glutamyl-meso-2,6-diaminopimeloyl-D-alanyl-D-alanine + UDP-N-acetyl-alpha-D-glucosamine = di-trans,octa-cis-undecaprenyl diphospho-[N-acetyl-alpha-D-glucosaminyl-(1-&gt;4)]-N-acetyl-alpha-D-muramoyl-L-alanyl-D-glutamyl-meso-2,6-diaminopimeloyl-D-alanyl-D-alanine + UDP + H(+). It participates in cell wall biogenesis; peptidoglycan biosynthesis. Its function is as follows. Cell wall formation. Catalyzes the transfer of a GlcNAc subunit on undecaprenyl-pyrophosphoryl-MurNAc-pentapeptide (lipid intermediate I) to form undecaprenyl-pyrophosphoryl-MurNAc-(pentapeptide)GlcNAc (lipid intermediate II). This Borrelia hermsii (strain HS1 / DAH) protein is UDP-N-acetylglucosamine--N-acetylmuramyl-(pentapeptide) pyrophosphoryl-undecaprenol N-acetylglucosamine transferase.